The following is a 376-amino-acid chain: UDP-N-acetylglucosamine--N-acetylmuramyl-(pentapeptide) pyrophosphoryl-undecaprenol N-acetylglucosamine transferase (376 aa).

Residues 11–13 (TGG), Asn117, Arg160, Ser208, and Gln310 each bind UDP-N-acetyl-alpha-D-glucosamine.

This sequence belongs to the glycosyltransferase 28 family. MurG subfamily.

It localises to the cell inner membrane. It catalyses the reaction di-trans,octa-cis-undecaprenyl diphospho-N-acetyl-alpha-D-muramoyl-L-alanyl-D-glutamyl-meso-2,6-diaminopimeloyl-D-alanyl-D-alanine + UDP-N-acetyl-alpha-D-glucosamine = di-trans,octa-cis-undecaprenyl diphospho-[N-acetyl-alpha-D-glucosaminyl-(1-&gt;4)]-N-acetyl-alpha-D-muramoyl-L-alanyl-D-glutamyl-meso-2,6-diaminopimeloyl-D-alanyl-D-alanine + UDP + H(+). The protein operates within cell wall biogenesis; peptidoglycan biosynthesis. Functionally, cell wall formation. Catalyzes the transfer of a GlcNAc subunit on undecaprenyl-pyrophosphoryl-MurNAc-pentapeptide (lipid intermediate I) to form undecaprenyl-pyrophosphoryl-MurNAc-(pentapeptide)GlcNAc (lipid intermediate II). This is UDP-N-acetylglucosamine--N-acetylmuramyl-(pentapeptide) pyrophosphoryl-undecaprenol N-acetylglucosamine transferase from Rickettsia rickettsii (strain Iowa).